A 397-amino-acid polypeptide reads, in one-letter code: MAPKRRPVPLIIAPTGEGQSTNIDAASEANLEALQRKLGELDLDEQQRKRLEAFLTQKAQVGELKDEDFDPICELGAGNGGVVHKVRHKPSRLVMARKLIHLEIKPAIRNQIIRELQVLHECNSPYIVGFYGAFYSDGEISICMEHMDGGSLDQVLKEARRIPEEILGKVSIAVLRGLVYLREKHQIMHRDVKPSNILVNSRGEIKLCDFGVSGQLIDSMANSFVGTRSYMSPERLQGTHYSVQSDVWSMGLSLVELAIGRFPIPPPDAKELEAIFGRPVLDKGGAEGHSMSPRQRPPGRPVSGHGMDSRPAMAIFELLDYIVNEPPPKLPHGVFTTDFEEFVMKCLMKNPADRADLKMLMGHTFIKRAEVEEVDFAGWMCKTMGLPQPSTPTHSAE.

Positions methionine 1–threonine 21 are disordered. In terms of domain architecture, Protein kinase spans phenylalanine 69–isoleucine 366. Residues leucine 75–valine 83 and lysine 98 each bind ATP. The active-site Proton acceptor is aspartate 191. Phosphoserine; by RAF occurs at positions 219 and 223. Residues glycine 284 to glycine 306 are disordered.

The protein belongs to the protein kinase superfamily. STE Ser/Thr protein kinase family. MAP kinase kinase subfamily. Post-translationally, phosphorylation on Ser/Thr by MAP kinase kinase kinases (RAF) positively regulates the kinase activity.

It carries out the reaction L-seryl-[protein] + ATP = O-phospho-L-seryl-[protein] + ADP + H(+). It catalyses the reaction L-threonyl-[protein] + ATP = O-phospho-L-threonyl-[protein] + ADP + H(+). The catalysed reaction is L-tyrosyl-[protein] + ATP = O-phospho-L-tyrosyl-[protein] + ADP + H(+). Functionally, catalyzes the concomitant phosphorylation of a threonine and a tyrosine residue in a Thr-Glu-Tyr sequence located in MAP kinases. In Cyprinus carpio (Common carp), this protein is Dual specificity mitogen-activated protein kinase kinase 2 (map2k2).